Here is a 579-residue protein sequence, read N- to C-terminus: Viral transcription factor IE2 (579 aa).

The segment covering 1 to 11 (MESSAKRKMDP) has biased composition (basic and acidic residues). 2 disordered regions span residues 1-30 (MESSAKRKMDPDNPDEGPSSKVPRPETPVT) and 99-161 (DSSS…VIIK). The segment covering 99–133 (DSSSTGPTLTTHSCSVSSAPLNKPTPTSVAVTNTP) has biased composition (polar residues). Residues K175 and K180 each participate in a glycyl lysine isopeptide (Lys-Gly) (interchain with G-Cter in SUMO) cross-link. The SUMO-interacting motif 1/SIM1 motif lies at 199-202 (CIVI). Residues 200–208 (IVISDSEEE) form a non-covalent SUMO1 binding region (SIM) region. 2 positions are modified to phosphoserine: S203 and S205. The interval 206-335 (EEEQGEEVET…SKRISELDNE (130 aa)) is disordered. Composition is skewed to low complexity over residues 216–236 (RGATASSPSTGSGTPRVTSPT), 259–270 (SSSSSSCSSASD), and 301–316 (AASSSLLSCGHQSSGG). The SUMO-interacting motif 1/SIM2 signature appears at 409 to 412 (IQII). The short motif at 500-503 (VDLL) is the SUMO-interacting motif 1/SIM3 element.

The protein belongs to the HHV-5 IE2 protein family. Interacts with host SUMO-modified form of TATA-binding protein (TBP)-associated factor 12/TAF12 in a SIM-dependent manner; this interaction increases the transactivation activity of IE2. Interacts with host CHAF1A. Interacts with several components of the host transcriptional machinery including TBP, TF2B and CREB1. Interacts with host DNA replication licensing factor MCM3. Interacts with host PLSCR1; this interaction inhibits IE2 transactivating activity. In terms of processing, phosphorylated by host CK2 at Ser-203 and Ser-205; leading to enhanced SUMOylation. SUMOylated; SUMOylation is enhanced when IE2 is phosphorylated by host CK2. The sumoylation is necessary for efficient replication of the virus and thus for the function of this viral transcription factor.

It localises to the host nucleus. In terms of biological role, stimulates viral early and late gene expression and thus play a crucial role in the regulation of productive infection. Selectively drives host RNA Pol II transcription initiation at a subset of viral early-late and late promoters without substantially affecting Pol II transcription of expressed host genes. Mechanistically, forms a repressive complex at the major immediate-early promoter region involving direct association with host nucleosomes and TBP. Concerning activation, stimulates transcription by binding nearby, but not within, core promoter regions. In addition, activates quiescent cells to reenter the cell cycle and up-regulates several E2F-responsive genes, which are responsible for pushing the cell into S phase. In S-phase, inhibits cellular DNA synthesis and blocks further cell cycle progression. This Homo sapiens (Human) protein is Viral transcription factor IE2 (UL122).